The chain runs to 533 residues: Beta-apo-4'-carotenal oxygenase (533 aa).

Residues glutamate 226 and cysteine 260 contribute to the active site.

Belongs to the aldehyde dehydrogenase family.

It carries out the reaction 4'-apo-beta-carotenal + NAD(+) + H2O = neurosporaxanthin + NADH + 2 H(+). Functionally, beta-apo-4'-carotenal oxygenase involved in the last step of synthesis of neurosporaxanthin, a carboxylic apocarotenoid acting as an essential protective pigment and leading to orange pigmentation. Converts the aldehyde beta-apo-4'-carotenal into neurosporaxanthin. Neurosporaxanthin is synthesized from geranyl-geranyl pyrophosphate (GGPP) through several enzymatic activities. Phytoene synthase activity performed by the bifunctional enzyme al-2 first produces phytoene from geranyl-geranyl pyrophosphate (GGPP). The phytoene dehydrogenase al-1 then introduces 5 desaturations to lead to 3,4-didehydrolycopene via the intermediates phytofluene, zeta-carotene, neurosporene and lycopene. Al-2 cyclase activity then converts 3,4-didehydrolycopene into torulene. Al-2 can also convet lycopene into gamma-carotene which in turn is converted to beta-carotene by an additional al-2 cyclization reaction. Torulene is the substrate of the dioxidase cao-2 that breaks the molecule, removing five carbon atoms to yield beta-apo-4'-carotenal, whereas the aldehyde dehydrogenase ylo-1 mediates the last step by converting beta-apo-4'-carotenal into neurosporaxanthin. The chain is Beta-apo-4'-carotenal oxygenase from Neurospora crassa (strain ATCC 24698 / 74-OR23-1A / CBS 708.71 / DSM 1257 / FGSC 987).